Reading from the N-terminus, the 83-residue chain is MIEGRVQRVGFRASCNRRALDLGISGWVRNLSDGRVEVQAEGPPLALSELRAWCEVGPPGARVVRVTPSQLPITGDDWFEVRY.

The region spanning 1-83 is the Acylphosphatase-like domain; the sequence is MIEGRVQRVG…TGDDWFEVRY (83 aa). Residues Arg12 and Asn30 contribute to the active site.

Belongs to the acylphosphatase family.

It catalyses the reaction an acyl phosphate + H2O = a carboxylate + phosphate + H(+). The protein is Acylphosphatase (acyP) of Synechococcus sp. (strain CC9605).